Consider the following 213-residue polypeptide: Large ribosomal subunit protein uL3 (213 aa).

Q151 is modified (N5-methylglutamine).

The protein belongs to the universal ribosomal protein uL3 family. In terms of assembly, part of the 50S ribosomal subunit. Forms a cluster with proteins L14 and L19. In terms of processing, methylated by PrmB.

One of the primary rRNA binding proteins, it binds directly near the 3'-end of the 23S rRNA, where it nucleates assembly of the 50S subunit. This chain is Large ribosomal subunit protein uL3, found in Rhizobium johnstonii (strain DSM 114642 / LMG 32736 / 3841) (Rhizobium leguminosarum bv. viciae).